Here is a 90-residue protein sequence, read N- to C-terminus: Acylphosphatase (90 aa).

In terms of domain architecture, Acylphosphatase-like spans 4–90 (CVRVRVSGRV…KGHDDFKIIY (87 aa)). Residues Arg19 and Asn37 contribute to the active site.

This sequence belongs to the acylphosphatase family.

It carries out the reaction an acyl phosphate + H2O = a carboxylate + phosphate + H(+). This is Acylphosphatase (acyP) from Methanothrix thermoacetophila (strain DSM 6194 / JCM 14653 / NBRC 101360 / PT) (Methanosaeta thermophila).